A 182-amino-acid chain; its full sequence is UPF0397 protein BCQ_2505 (182 aa).

5 helical membrane passes run 9-29 (VVAI…GFSI), 40-60 (AILT…IGLI), 71-91 (WGIW…MGFI), 114-134 (ITGL…DIIV), and 142-162 (IVIQ…VLGL).

Belongs to the UPF0397 family.

It is found in the cell membrane. The protein is UPF0397 protein BCQ_2505 of Bacillus cereus (strain Q1).